The chain runs to 378 residues: tRNA (guanine(26)-N(2))-dimethyltransferase (378 aa).

One can recognise a Trm1 methyltransferase domain in the interval 4-374 (KEVTEGKVRI…KEYEEITKCI (371 aa)). S-adenosyl-L-methionine contacts are provided by Arg-44, Arg-69, Asp-87, Asp-114, and Ala-115. 4 residues coordinate Zn(2+): Cys-246, Cys-249, Cys-263, and Cys-266.

This sequence belongs to the class I-like SAM-binding methyltransferase superfamily. Trm1 family.

The catalysed reaction is guanosine(26) in tRNA + 2 S-adenosyl-L-methionine = N(2)-dimethylguanosine(26) in tRNA + 2 S-adenosyl-L-homocysteine + 2 H(+). Its function is as follows. Dimethylates a single guanine residue at position 26 of a number of tRNAs using S-adenosyl-L-methionine as donor of the methyl groups. This Saccharolobus solfataricus (strain ATCC 35092 / DSM 1617 / JCM 11322 / P2) (Sulfolobus solfataricus) protein is tRNA (guanine(26)-N(2))-dimethyltransferase.